A 126-amino-acid polypeptide reads, in one-letter code: S-adenosylmethionine decarboxylase proenzyme (126 aa).

The active-site Schiff-base intermediate with substrate; via pyruvic acid is serine 63. Serine 63 is subject to Pyruvic acid (Ser); by autocatalysis. The active-site Proton acceptor; for processing activity is the histidine 68. The active-site Proton donor; for catalytic activity is cysteine 83.

It belongs to the prokaryotic AdoMetDC family. Type 1 subfamily. In terms of assembly, heterotetramer of two alpha and two beta chains arranged as a dimer of alpha/beta heterodimers. Pyruvate is required as a cofactor. Is synthesized initially as an inactive proenzyme. Formation of the active enzyme involves a self-maturation process in which the active site pyruvoyl group is generated from an internal serine residue via an autocatalytic post-translational modification. Two non-identical subunits are generated from the proenzyme in this reaction, and the pyruvate is formed at the N-terminus of the alpha chain, which is derived from the carboxyl end of the proenzyme. The post-translation cleavage follows an unusual pathway, termed non-hydrolytic serinolysis, in which the side chain hydroxyl group of the serine supplies its oxygen atom to form the C-terminus of the beta chain, while the remainder of the serine residue undergoes an oxidative deamination to produce ammonia and the pyruvoyl group blocking the N-terminus of the alpha chain.

It carries out the reaction S-adenosyl-L-methionine + H(+) = S-adenosyl 3-(methylsulfanyl)propylamine + CO2. Its pathway is amine and polyamine biosynthesis; S-adenosylmethioninamine biosynthesis; S-adenosylmethioninamine from S-adenosyl-L-methionine: step 1/1. Its function is as follows. Catalyzes the decarboxylation of S-adenosylmethionine to S-adenosylmethioninamine (dcAdoMet), the propylamine donor required for the synthesis of the polyamines spermine and spermidine from the diamine putrescine. The polypeptide is S-adenosylmethionine decarboxylase proenzyme (Pelotomaculum thermopropionicum (strain DSM 13744 / JCM 10971 / SI)).